A 268-amino-acid chain; its full sequence is UPF0354 protein OB2234 (268 aa).

This sequence belongs to the UPF0354 family.

In Oceanobacillus iheyensis (strain DSM 14371 / CIP 107618 / JCM 11309 / KCTC 3954 / HTE831), this protein is UPF0354 protein OB2234.